Reading from the N-terminus, the 277-residue chain is Heme oxygenase (277 aa).

H29 is a binding site for heme b.

The protein belongs to the heme oxygenase family.

Its subcellular location is the microsome. The protein resides in the endoplasmic reticulum. The enzyme catalyses heme b + 3 reduced [NADPH--hemoprotein reductase] + 3 O2 = biliverdin IXalpha + CO + Fe(2+) + 3 oxidized [NADPH--hemoprotein reductase] + 3 H2O + H(+). Heme oxygenase cleaves the heme ring at the alpha methene bridge to form biliverdin. Biliverdin is subsequently converted to bilirubin by biliverdin reductase. Under physiological conditions, the activity of heme oxygenase is highest in the spleen, where senescent erythrocytes are sequestrated and destroyed. The sequence is that of Heme oxygenase (hmox) from Takifugu rubripes (Japanese pufferfish).